We begin with the raw amino-acid sequence, 45 residues long: Globin, minor monomeric component (45 aa).

Residues 1–45 form the Globin domain; it reads GLSAAERQVVASCWKDIAGADXGAGVGKEXLIKFISAAPEMAAVF.

The protein belongs to the globin family. Monomer.

This chain is Globin, minor monomeric component, found in Glycera dibranchiata (Bloodworm).